A 495-amino-acid chain; its full sequence is Trimethylamine methyltransferase MttB (495 aa).

Position 334 (Pyl334) is a non-standard amino acid, pyrrolysine.

It belongs to the trimethylamine methyltransferase family. As to quaternary structure, can form a complex with MttC.

It carries out the reaction Co(I)-[trimethylamine-specific corrinoid protein] + trimethylamine + H(+) = methyl-Co(III)-[trimethylamine-specific corrinoid protein] + dimethylamine. Its pathway is one-carbon metabolism; methanogenesis from trimethylamine. Catalyzes the transfer of a methyl group from trimethylamine to the corrinoid cofactor of MttC. This chain is Trimethylamine methyltransferase MttB, found in Methanosarcina barkeri.